Here is a 101-residue protein sequence, read N- to C-terminus: Ubiquitin-related modifier 1 (101 aa).

Gly-101 is subject to 1-thioglycine. Residue Gly-101 forms a Glycyl lysine isopeptide (Gly-Lys) (interchain with K-? in acceptor proteins) linkage.

Belongs to the URM1 family. Post-translationally, C-terminal thiocarboxylation occurs in 2 steps, it is first acyl-adenylated (-COAMP) via the hesA/moeB/thiF part of UBA4, then thiocarboxylated (-COSH) via the rhodanese domain of UBA4.

The protein localises to the cytoplasm. The protein operates within tRNA modification; 5-methoxycarbonylmethyl-2-thiouridine-tRNA biosynthesis. Acts as a sulfur carrier required for 2-thiolation of mcm(5)S(2)U at tRNA wobble positions of cytosolic tRNA(Lys), tRNA(Glu) and tRNA(Gln). Serves as sulfur donor in tRNA 2-thiolation reaction by being thiocarboxylated (-COSH) at its C-terminus by the MOCS3 homolog UBA4. The sulfur is then transferred to tRNA to form 2-thiolation of mcm(5)S(2)U. Prior mcm(5) tRNA modification by the elongator complex is required for 2-thiolation. Also acts as a ubiquitin-like protein (UBL) that is covalently conjugated via an isopeptide bond to lysine residues of target proteins such as AHP1. The thiocarboxylated form serves as substrate for conjugation and oxidative stress specifically induces the formation of UBL-protein conjugates. The sequence is that of Ubiquitin-related modifier 1 from Scheffersomyces stipitis (strain ATCC 58785 / CBS 6054 / NBRC 10063 / NRRL Y-11545) (Yeast).